The sequence spans 128 residues: Gastrotropin (128 aa).

Alanine 2 is modified (N-acetylalanine).

It belongs to the calycin superfamily. Fatty-acid binding protein (FABP) family. As to expression, expressed in ovary granulosa and luteal cells.

The protein localises to the cytoplasm. The protein resides in the membrane. In terms of biological role, binds to bile acids and is involved in enterohepatic bile acid metabolism. Required for efficient apical to basolateral transport of conjugated bile acids in ileal enterocytes. Stimulates gastric acid and pepsinogen secretion. This is Gastrotropin (Fabp6) from Mus musculus (Mouse).